The following is a 394-amino-acid chain: Argininosuccinate synthase (394 aa).

ATP contacts are provided by residues 7 to 15 and Ala35; that span reads AYSGGLDTS. An L-citrulline-binding site is contributed by Tyr85. Gly115 lines the ATP pocket. 3 residues coordinate L-aspartate: Thr117, Asn121, and Asp122. Asn121 contributes to the L-citrulline binding site. 5 residues coordinate L-citrulline: Arg125, Ser174, Ser183, Glu258, and Tyr270.

This sequence belongs to the argininosuccinate synthase family. Type 1 subfamily. Homotetramer.

The protein localises to the cytoplasm. The enzyme catalyses L-citrulline + L-aspartate + ATP = 2-(N(omega)-L-arginino)succinate + AMP + diphosphate + H(+). It participates in amino-acid biosynthesis; L-arginine biosynthesis; L-arginine from L-ornithine and carbamoyl phosphate: step 2/3. In Methanopyrus kandleri (strain AV19 / DSM 6324 / JCM 9639 / NBRC 100938), this protein is Argininosuccinate synthase.